The following is a 117-amino-acid chain: Large ribosomal subunit protein bL20 (117 aa).

Belongs to the bacterial ribosomal protein bL20 family.

Its function is as follows. Binds directly to 23S ribosomal RNA and is necessary for the in vitro assembly process of the 50S ribosomal subunit. It is not involved in the protein synthesizing functions of that subunit. The polypeptide is Large ribosomal subunit protein bL20 (Leptospira interrogans serogroup Icterohaemorrhagiae serovar copenhageni (strain Fiocruz L1-130)).